Here is a 207-residue protein sequence, read N- to C-terminus: Ribosomal RNA small subunit methyltransferase G (207 aa).

Residues Gly76, Gln81, 127–128 (VE), and Arg141 each bind S-adenosyl-L-methionine.

This sequence belongs to the methyltransferase superfamily. RNA methyltransferase RsmG family.

The protein resides in the cytoplasm. The catalysed reaction is guanosine(527) in 16S rRNA + S-adenosyl-L-methionine = N(7)-methylguanosine(527) in 16S rRNA + S-adenosyl-L-homocysteine. In terms of biological role, specifically methylates the N7 position of guanine in position 527 of 16S rRNA. This Neisseria meningitidis serogroup C (strain 053442) protein is Ribosomal RNA small subunit methyltransferase G.